Here is a 448-residue protein sequence, read N- to C-terminus: Beclin-1 (448 aa).

At M1 the chain carries N-acetylmethionine. Residues S14 and S29 each carry the phosphoserine modification. Positions 47 to 66 are disordered; it reads TTAQAKPGETQEEEANSGEE. Residues S88, S91, and S94 each carry the phosphoserine; by AMPK modification. The BH3 signature appears at 106–125; that stretch reads TMENLSRRLKVTGDLFDIMS. The segment at 110 to 157 is interaction with BCL2 and BCL2L1 isoform Bcl-X(L); it reads LSRRLKVTGDLFDIMSGQTDVDHPLCEECTDTLLDQLDTQLNVTENEC. T117 carries the post-translational modification Phosphothreonine; by DAPK1. The stretch at 140–268 forms a coiled coil; that stretch reads DTLLDQLDTQ…LDKLKKTNVF (129 aa). The tract at residues 243-448 is evolutionary conserved domain (ECD); that stretch reads DELKSVENQV…AWVSSQFYNK (206 aa). Residues K400 and K435 each participate in a glycyl lysine isopeptide (Lys-Gly) (interchain with G-Cter in ubiquitin) cross-link. The interval 423–448 is required for membrane-association; that stretch reads WTKALKFMLTNLKWGLAWVSSQFYNK.

It belongs to the beclin family. A homodimeric form is proposed to exist; this metastable form readily transits to ATG14- or UVRAG-containing complexes with BECN1:UVRAG being more stable than BECN1:ATG14. Component of the PI3K (PI3KC3/PI3K-III/class III phosphatidylinositol 3-kinase) complex whose core is composed of the catalytic subunit PIK3C3, the regulatory subunit PIK3R4 and BECN1, and associates with additional regulatory/auxiliary subunits to form alternative complex forms. Accepted alternative complex forms containing a fourth regulatory subunit in a mutually exclusive manner are PI3K complex I (PI3KC3-C1) containing ATG14, and PI3K complex II (PI3KC3-C2) containing UVRAG. PI3KC3-C1 displays a V-shaped architecture with PIK3R4 serving as a bridge between PIK3C3 and the ATG14:BECN1 subcomplex. Both, PI3KC3-C1 and PI3KC3-C2, can associate with further regulatory subunits, such as RUBCN, SH3GLB1/Bif-1 and AMBRA1. PI3KC3-C1 probably associates with PIK3CB. Forms a complex with PPP2CA and AMBRA1; AMBRA1 and BECN1 components of the complex regulate MYC stability via different pathways. Component of the complex, at least composed of LRPPRC, BECN1 and BCL2; the interactions prevent BECN1 from forming an autophagy-inducing complex with PIK3C3. Interacts with AMBRA1, GOPC, GRID2 and PIK3CB. Interacts with BCL2 and BCL2L1 isoform Bcl-X(L); the interaction inhibits BECN1 function in promoting autophagy by interfering with the formation of the PI3K complex. Interacts with cytosolic HMGB1; inhibits the interaction of BECN1 and BCL2 leading to promotion of autophagy. Interacts with USP10, USP13, VMP1, DAPK1. Interacts with the poly-Gln domain of ATXN3; the interaction causes deubiquitination at Lys-400 and stabilizes BECN1. Interacts with SLAMF1. Interacts with TRIM5; the interaction causes activation of BECN1 by causing its dissociation from its inhibitors BCL2 and TAB2. Interacts with active ULK1 (phosphorylated on 'Ser-317') and MEFV simultaneously. Interacts with TRIM50. Interacts with TRIM16. Interacts with WDR81 and WDR91; negatively regulates the PI3 kinase/PI3K activity associated with endosomal membranes. Interacts with LAPTM4B; competes with EGFR for LAPTM4B binding; regulates EGFR activity. Interacts with ATG14; this interaction is increased in the absence of TMEM39A. Interacts with WASHC1; preventing interaction with AMBRA1 and the DCX(AMBRA1) complex and subsequent ubiquitination. Interacts with TRIM17. Interacts with BCL2L10/BCL-B (via BH1 domain). Interacts with SH3BGRL. Interacts with Irgm1; enhancing BECN1-interacting partners and influencing the composition of the BECN1 complex. Interacts with ARMC3. Interacts with LRPPRC. In terms of assembly, (Microbial infection) Interacts with murine gammaherpesvirus 68 M11; the viral protein binds BECN1 with higher affinity than cellular BCL2. In terms of processing, phosphorylation at Thr-117 by DAPK1 reduces its interaction with BCL2 and BCL2L1 and promotes induction of autophagy. In response to autophagic stimuli, phosphorylated at serine residues by AMPK in an ATG14-dependent manner, and this phosphorylation is critical for maximally efficient autophagy. Polyubiquitinated by NEDD4, both with 'Lys-11'- and 'Lys-63'-linkages. 'Lys-11'-linked polyubiquitination leads to degradation and is enhanced when the stabilizing interaction partner VPS34 is depleted. Deubiquitinated by USP10 and USP13, leading to stabilize the PIK3C3/VPS34-containing complexes. Polyubiquitinated at Lys-400 with 'Lys-48'-linkages. 'Lys-48'-linked poyubiquitination of Lys-400 leads to degradation. Deubiquitinated by ATXN3, leading to stabilization. Ubiquitinated at Lys-435 via 'Lys-63'-linkage by the DCX(AMBRA1) complex, thereby increasing the association between BECN1 and PIK3C3 to promote PIK3C3 activity. 'Lys-48'-linked ubiquitination by RNF216 leads to proteasomal degradation and autophagy inhibition. Post-translationally, proteolytically processed by caspases including CASP8 and CASP3; the C-terminal fragments lack autophagy-inducing capacity and are proposed to induce apoptosis. Thus the cleavage is proposed to be an determinant to switch from autophagy to apoptosis pathways affecting cellular homeostasis including viral infections and survival of tumor cells.

It localises to the cytoplasm. Its subcellular location is the golgi apparatus. The protein localises to the trans-Golgi network membrane. It is found in the endosome membrane. The protein resides in the endoplasmic reticulum membrane. It localises to the mitochondrion membrane. Its subcellular location is the endosome. The protein localises to the cytoplasmic vesicle. It is found in the autophagosome. The protein resides in the mitochondrion. It localises to the nucleus. Plays a central role in autophagy. Acts as a core subunit of different PI3K complex forms that mediate formation of phosphatidylinositol 3-phosphate and are believed to play a role in multiple membrane trafficking pathways: PI3KC3-C1 is involved in initiation of autophagosomes and PI3KC3-C2 in maturation of autophagosomes and endocytosis. Involved in regulation of degradative endocytic trafficking and required for the abscission step in cytokinesis, probably in the context of PI3KC3-C2. Essential for the formation of PI3KC3-C2 but not PI3KC3-C1 PI3K complex forms. Involved in endocytosis including endosome formation in neuronal cells. May play a role in antiviral host defense. Its function is as follows. Beclin-1-C 35 kDa localized to mitochondria can promote apoptosis; it induces the mitochondrial translocation of BAX and the release of proapoptotic factors. The polypeptide is Beclin-1 (Becn1) (Mus musculus (Mouse)).